The sequence spans 589 residues: ATP-dependent lipid A-core flippase (589 aa).

Helical transmembrane passes span 29–49 (LLLV…TGFL), 70–90 (WLPV…YITD), 157–177 (VIGA…TILV), 261–281 (MIGA…ALAG), and 283–303 (LTAG…PGLK). The ABC transmembrane type-1 domain occupies 32–314 (VAALIAALIE…LTNVQNMVQR (283 aa)). In terms of domain architecture, ABC transporter spans 346-582 (IEFRDVTARY…GGLYSHLHGM (237 aa)). Position 380 to 387 (380 to 387 (GRSGSGKS)) interacts with ATP.

This sequence belongs to the ABC transporter superfamily. Lipid exporter (TC 3.A.1.106) family. In terms of assembly, homodimer.

The protein localises to the cell inner membrane. The catalysed reaction is ATP + H2O + lipid A-core oligosaccharideSide 1 = ADP + phosphate + lipid A-core oligosaccharideSide 2.. Involved in lipopolysaccharide (LPS) biosynthesis. Translocates lipid A-core from the inner to the outer leaflet of the inner membrane. Transmembrane domains (TMD) form a pore in the inner membrane and the ATP-binding domain (NBD) is responsible for energy generation. The protein is ATP-dependent lipid A-core flippase of Xanthomonas axonopodis pv. citri (strain 306).